The chain runs to 522 residues: Cyclic GMP-AMP synthase (522 aa).

A disordered region spans residues 1 to 144; it reads MQPWHGKAMQ…PPGPWDVPSP (144 aa). DNA-binding regions lie at residues 1-160 and 173-215; these read MQPW…DAAP and KLSR…GSYY. K7 is subject to N6-acetyllysine. The residue at position 13 (S13) is a Phosphoserine. N6-acetyllysine is present on K21. Position 37 is a phosphoserine (S37). N6-acetyllysine is present on residues K47, K50, K56, K62, and K63. The residue at position 64 (S64) is a Phosphoserine. Residues 64–73 show a composition bias toward basic and acidic residues; it reads SAPDTQERPP. The interval 64-75 is required for association with the cell membrane; that stretch reads SAPDTQERPPVR. T68 is subject to Phosphothreonine. N6-acetyllysine occurs at positions 82 and 83. A compositionally biased stretch (polar residues) spans 88 to 97; the sequence is AQDTQPSDAT. At T91 the chain carries Phosphothreonine. 3 positions are modified to phosphoserine: S98, S116, and S129. Positions 98–118 are enriched in low complexity; sequence SAPGAEGLEPPAAREPALSRA. A required for activation upon DNA viral infection region spans residues 120 to 160; that stretch reads SCRQRGARCSTKPRPPPGPWDVPSPGLPVSAPILVRRDAAP. The residue at position 131 (K131) is an N6-lactoyllysine. Over residues 132 to 144 the composition is skewed to pro residues; it reads PRPPPGPWDVPSP. S143 is modified (phosphoserine). The Nuclear export signal signature appears at 169–174; sequence LEKLKL. A Glycyl lysine isopeptide (Lys-Gly) (interchain with G-Cter in ubiquitin) cross-link involves residue K173. At D191 the chain carries PolyADP-ribosyl aspartic acid. Position 210 is a (Microbial infection) Deamidated asparagine; by herpes simplex virus 1/HHV-1 UL37 (N210). GTP is bound at residue T211. A Phosphoserine modification is found at S213. S213 lines the ATP pocket. Y215 is modified (phosphotyrosine; by BLK). Residues E225 and D227 each contribute to the Mg(2+) site. 225-227 lines the ATP pocket; the sequence is EFD. A 2',3'-cGAMP-binding site is contributed by D227. K231 is covalently cross-linked (Glycyl lysine isopeptide (Lys-Gly) (interchain with G-Cter in SUMO)). Residue K285 forms a Glycyl lysine isopeptide (Lys-Gly) (interchain with G-Cter in ubiquitin) linkage. A 5-glutamyl polyglutamate modification is found at E286. The Nuclear localization signal motif lies at 295–305; the sequence is DVIMKRKRGGS. Residues 299 to 302 carry the KRKR-loop motif; the sequence is KRKR. The residue at position 305 (S305) is a Phosphoserine; by CDK1 and PKB. E314 is subject to 5-glutamyl glutamate. D319 is a binding site for GTP. A Mg(2+)-binding site is contributed by D319. D319 is a 2',3'-cGAMP binding site. The interval 341–382 is interaction with collided ribosomes; sequence QNWLSAKVRKQLRLKPFYLVPKHAKEGNGFQEETWRLSFSHI. K347 is covalently cross-linked (Glycyl lysine isopeptide (Lys-Gly) (interchain with G-Cter in SUMO); alternate). K347 participates in a covalent cross-link: Glycyl lysine isopeptide (Lys-Gly) (interchain with G-Cter in ubiquitin); alternate. Residues K362 and R376 each coordinate 2',3'-cGAMP. 376-383 lines the GTP pocket; the sequence is RLSFSHIE. 380–383 lines the ATP pocket; that stretch reads SHIE. N6-acetyllysine is present on K384. K384 is covalently cross-linked (Glycyl lysine isopeptide (Lys-Gly) (interchain with G-Cter in SUMO); alternate). K384 participates in a covalent cross-link: Glycyl lysine isopeptide (Lys-Gly) (interchain with G-Cter in ubiquitin); alternate. Positions 384–407 are DNA-binding; it reads KEILNNHGKSKTCCENKEEKCCRK. N389 bears the (Microbial infection) Deamidated asparagine; by herpes simplex virus 1/HHV-1 UL37 mark. Residue H390 coordinates Zn(2+). K392 and K394 each carry N6-acetyllysine. Residue K394 forms a Glycyl lysine isopeptide (Lys-Gly) (interchain with G-Cter in SUMO) linkage. Residues C396, C397, and C404 each contribute to the Zn(2+) site. 2 S-palmitoyl cysteine lipidation sites follow: C404 and C405. Glycyl lysine isopeptide (Lys-Gly) (interchain with G-Cter in ubiquitin) cross-links involve residues K411, K414, K427, and K428. K414 is modified (N6-acetyllysine). K414 is a binding site for ATP. Positions 427–429 match the KKH-loop motif; sequence KKH. Residues S434 and S435 each carry the phosphoserine modification. Residue 435–439 coordinates ATP; that stretch reads SYHVK. Residues Q451 and Q454 each carry the (Microbial infection) Deamidated glutamine; by herpes simplex virus 1/HHV-1 UL37 modification. C474 is lipidated: S-palmitoyl cysteine. K479 participates in a covalent cross-link: Glycyl lysine isopeptide (Lys-Gly) (interchain with G-Cter in SUMO); alternate. K479 is covalently cross-linked (Glycyl lysine isopeptide (Lys-Gly) (interchain with G-Cter in ubiquitin); alternate). The residue at position 506 (K506) is an N6-methyllysine.

The protein belongs to the mab-21 family. In terms of assembly, monomer in the absence of DNA. Homodimer in presence of dsDNA: forms a 2:2 dimer with two enzymes binding to two DNA molecules. Interacts with nucleosomes; interaction is mainly mediated via histones H2A and H2B and inactivates the nucleotidyltransferase activity by blocking DNA-binding and subsequent activation. Interacts with PQBP1 (via WW domain). Interacts with TRIM14; this interaction recruits USP14, leading to deubiquitinate and stabilize CGAS and promote type I interferon production. Interacts with ZCCHC3; promoting sensing of dsDNA by CGAS. Interacts (when not monomethylated) with (poly-ADP-ribosylated) PARP1; interaction takes place in the nucleus and prevents the formation of the PARP1-TIMELESS complex. Interacts (when monomethylated) with SGF29; interaction with SGF29 prevents interaction with PARP1. Interacts with PCBP2; preventing the formation of liquid-like droplets in which CGAS is activated. Interacts with IRGM; promoting CGAS degradation. Interacts with DDX41. (Microbial infection) Interacts with herpes virus 8/HHV-8 protein ORF52; this interaction inhibits cGAS enzymatic activity by preventing the formation of liquid-like droplets by CGAS. As to quaternary structure, (Microbial infection) Interacts with herpes simplex virus 1 protein UL37; this interaction deaminates CGAS and inhibits its activation. In terms of assembly, (Microbial infection) Interacts with vaccinia virus protein OPG067; this interaction promotes CGAS proteasomal degradation. (Microbial infection) Interacts with cytomegalovirus protein UL31; this interaction promotes dissociation of DNA from CGAS, thereby inhibiting the enzymatic activity of CGAS. As to quaternary structure, (Microbial infection) Interacts with herpes simplex virus 1 tegument protein VP22 (UL49); this interaction inhibits cGAS enzymatic activity by preventing the formation of liquid-like droplets by CGAS. In terms of assembly, (Microbial infection) Interacts with herpesvirus 3 tegument protein VP22 (ORF9); this interaction inhibits cGAS enzymatic activity by preventing the formation of liquid-like droplets by CGAS. (Microbial infection) Interacts with human cytomegalovirus proteins UL42 and UL83; these interactions result in the inhibition of cGAS-STING signaling. It depends on Mg(2+) as a cofactor. Mn(2+) serves as cofactor. Zn(2+) is required as a cofactor. In terms of processing, the N-terminal disordered part (1-160) is phosphorylated by AURKB during the G2-M transition, blocking CGAS liquid phase separation and preventing activation. Phosphorylation at Tyr-215 by BLK promotes cytosolic retention. Localizes into the nucleus following dephosphorylation at Tyr-215. Phosphorylation at Ser-435 activates the nucleotidyltransferase activity. Dephosphorylation at Ser-435 by PPP6C impairs its ability to bind GTP, thereby inactivating it. Phosphorylation at Thr-68 and Ser-213 by PRKDC inhibits its cyclic GMP-AMP synthase activity by impairing homodimerization and activation. Phosphorylation at Ser-305 by AKT (AKT1, AKT2 or AKT3) suppresses the nucleotidyltransferase activity. Phosphorylation at Ser-305 by CDK1 during mitosis leads to its inhibition, thereby preventing CGAS activation by self-DNA during mitosis. Dephosphorylated at Ser-305 by protein phosphatase PP1 upon mitotic exit. Ubiquitinated at Lys-414 via 'Lys-48'-linked polyubiquitin chains, leading to its SQSTM1-mediated autophagic degradation. Interaction with TRIM14 promotes recruitment of USP14, leading to deubiquitinate Lys-414 and stabilize CGAS. Ubiquitinated at Lys-173 and Lys-384 by RNF185 via 'Lys-27'-linked polyubiquitination, promoting CGAS cyclic GMP-AMP synthase activity. Monoubiquitination at Lys-347 by TRIM56 promotes oligomerization and subsequent activation. Monoubiquitination by TRIM41 promotes CGAS activation. Ubiquitination at Lys-285 and Lys-479 via 'Lys-48'-linked polyubiquitination promotes its degradation. Deubiquitination at Lys-285 by USP29 promotes its stabilization. Deubiquitinated by USP27X, promoting its stabilization. Ubiquitinated at Lys-411 via 'Lys-63'-linked polyubiquitin chains by MARCHF8, leading to the inhibition of its DNA binding ability. In cycling cells, nucleosome-bound CGAS is ubiquitinated at Lys-427 and Lys-428 via 'Lys-48'-linked polyubiquitin chains by the ECS(SPSB3) complex, leading to its degradation: ubiquitination and degradation of nuclear CGAS during G1 and G2 phases is required to promote low intranuclear CGAS abundance before the next mitotic cycle. Post-translationally, sumoylated at Lys-231 and Lys-479 by TRIM38 in uninfected cells and during the early phase of viral infection, promoting its stability by preventing ubiquitination at Lys-285 and Lys-479, and subsequent degradation. Desumoylated by SENP2 during the late phase of viral infection. Sumoylation at Lys-347, Lys-384 and Lys-394 prevents DNA-binding, oligomerization and nucleotidyltransferase activity. Desumoylation at Lys-347, Lys-384 and Lys-394 by SENP7 relieves inhibition and activates CGAS. In terms of processing, polyglutamylated by TTLL6 at Glu-286, leading to impair DNA-binding activity. Monoglutamylated at Glu-314 by TTLL4, leading to impair the nucleotidyltransferase activity. Deglutamylated by AGBL5/CCP5 and AGBL6/CCP6. Acetylation at Lys-384, Lys-394 and Lys-414 inhibits the cyclic GMP-AMP synthase activity. Deacetylated upon cytosolic DNA challenge such as viral infections. Acetylation can be mediated by aspirin (acetylsalicylate) drug, which directly acetylates CGAS. Acetylation by aspirin efficiently inhibits CGAS-mediated immune responses and is able to suppress self-DNA-induced autoimmunity. Acetylation at Lys-47, Lys-56, Lys-62 and Lys-83 by KAT5 increases the cyclic GMP-AMP synthase activity by promoting DNA-binding and subsequent activation. Post-translationally, proteolytically cleaved by apoptotic caspases during apoptosis, leading to its inactivation. The damage of the nucleus and the mitochondria during apoptosis leads to leakage of nuclear and mitochondrial DNA, which activate CGAS: cleavage and inactivation during apoptosis in required to prevent cytokine overproduction. Cleaved by CASP3 at Asp-319 during virus-induced apoptosis, thereby inactivating it and preventing cytokine overproduction. Cleaved by CASP1 at Asp-140 and Asp-157 upon DNA virus infection; the cleavage impairs cGAMP production. Also cleaved by the pyroptotic CASP4 and CASP5 during non-canonical inflammasome activation; they don't cut at the same sites than CASP1. In terms of processing, degraded via selective autophagy following interaction with IRGM. IRGM promotes CGAS recruitment to autophagosome membranes, promoting its SQSTM1/p62-dependent autophagic degradation. Poly-ADP-ribosylation at Asp-191 by PARP1 impairs DNA-binding, thereby preventing the cyclic GMP-AMP synthase activity. Post-translationally, palmitoylation at Cys-474 by ZDHHC18 impairs DNA-binding, thereby preventing the cyclic GMP-AMP synthase activity. Palmitoylation at Cys-404 and Cys-405 by ZDHHC9 promotes homodimerization and cyclic GMP-AMP synthase activity. Depalmitoylation at Cys-404 and Cys-405 by LYPLAL1 impairs homodimerization and cyclic GMP-AMP synthase activity. In terms of processing, monomethylated at Lys-506 by SETD7. Monomethylation promotes interaction with SGF29, preventing interaction between PARP1 nad SGF29. Demethylation by RIOX1 promotes interaction with PARP1, followed by PARP1 inactivation. Lactylation by AARS2 prevents ability to undergo liquid-liquid phase separation (LLPS), thereby inhibiting CGAS activation. Post-translationally, (Microbial infection) Deamidated on 'Asn-210' by herpes simplex virus 1 protein UL37. This modification significantly reduces CGAS-dependent cGAMP production and innate immune signaling induced by dsDNA. In terms of processing, (Microbial infection) Degraded by an autophagy-mediated mechanism in presence of Chikungunya virus capsid protein. Expressed in the monocytic cell line THP1.

It is found in the nucleus. The protein localises to the chromosome. Its subcellular location is the cell membrane. The protein resides in the cytoplasm. It localises to the cytosol. The catalysed reaction is GTP + ATP = 2',3'-cGAMP + 2 diphosphate. It carries out the reaction GTP + ATP = pppGp(2'-5')A + diphosphate. The enzyme catalyses pppGp(2'-5')A = 2',3'-cGAMP + diphosphate. The enzyme activity is strongly increased by double-stranded DNA (dsDNA), but not by single-stranded DNA or RNA. DNA-binding induces the formation of liquid-like droplets in which CGAS is activated. Liquid-like droplets also create a selective environment that restricts entry of negative regulators, such as TREX1 or BANF1/BAF, allowing sensing of DNA. A number of mechanisms exist to restrict its activity toward self-DNA. The nucleotidyltransferase activity is inhibited in the nucleus via its association with nucleosomes: interacts with the acidic patch of histones H2A and H2B, thereby blocking DNA-binding and subsequent activation. CGAS is also inactive when associated with mitotic chromatin. Chromatin-bound CGAS cannot be activated by exogenous DNA in mitotic cells: phosphorylation of the N-terminal disordered part by AURKB during the G2-M transition blocks CGAS liquid phase separation and activation. Activity toward self-DNA is inhibited by BANF1/BAF upon acute loss of nuclear membrane integrity: BANF1/BAF acts by outcompeting CGAS for DNA-binding, thereby preventing CGAS activation. DNA-induced activation at micronuclei is also limited by TREX1, which degrades micronuclear DNA upon nuclear envelope rupture, thereby preventing CGAS activation. CGAS can be released from nucleosomes and activated by MRE11 component of the MRN complex, which displaces CGAS from acidic-patch-mediated sequestration. Acetylation at Lys-384, Lys-394 and Lys-414 inhibits the cyclic GMP-AMP synthase activity. Inhibited by aspirin (acetylsalicylate) drug, which acetylates CGAS. Acetylation by KAT5 increases the cyclic GMP-AMP synthase activity by promoting DNA-binding and subsequent activation. Phosphorylation at Ser-305 suppresses the nucleotidyltransferase activity. Phosphorylation at Ser-435 promotes the cyclic GMP-AMP synthase activity. Phosphorylation at Thr-68 and Ser-213 inhibits its cyclic GMP-AMP synthase activity. Ubiquitination at Lys-173 and Lys-384 via 'Lys-27'-linked polyubiquitination enhances the cyclic GMP-AMP synthase activity. Monoubiquitination at Lys-347 promotes oligomerization and subsequent activation. Sumoylation at Lys-347, Lys-384 and Lys-394 prevents DNA-binding, oligomerization and nucleotidyltransferase activity. The enzyme activity is impaired by the cleavage at Asp-140 and Asp-157 produced by CASP1. In addition to DNA, also activated by collided ribosomes upon translation stress: specifically binds collided ribosomes, promoting its activation and triggering type-I interferon production. Strongly inhibited by compound PF-06928215, which is specific for human protein. Inhibited by small-molecule inhibitors with a pyridoindole tricyclic core G108, G140 and G150. With respect to regulation, (Microbial infection) Nucleotidyltransferase activity is inhibited by different herpesvirus tegument proteins (Herpes simplex virus 1 tegument protein VP22, herpes virus 8 protein ORF52 and herpesvirus 3 tegument protein VP22/ORF9). Viral tegument proteins act by disrupting liquid-like droplets in which CGAS is activated, thereby preventing CGAS activity. Nucleotidyltransferase that catalyzes the formation of cyclic GMP-AMP (2',3'-cGAMP) from ATP and GTP and plays a key role in innate immunity. Catalysis involves both the formation of a 2',5' phosphodiester linkage at the GpA step and the formation of a 3',5' phosphodiester linkage at the ApG step, producing c[G(2',5')pA(3',5')p]. Acts as a key DNA sensor: directly binds double-stranded DNA (dsDNA), inducing the formation of liquid-like droplets in which CGAS is activated, leading to synthesis of 2',3'-cGAMP, a second messenger that binds to and activates STING1, thereby triggering type-I interferon production. Preferentially recognizes and binds curved long dsDNAs of a minimal length of 40 bp. Acts as a key foreign DNA sensor, the presence of double-stranded DNA (dsDNA) in the cytoplasm being a danger signal that triggers the immune responses. Has antiviral activity by sensing the presence of dsDNA from DNA viruses in the cytoplasm. Also acts as an innate immune sensor of infection by retroviruses, such as HIV-2, by detecting the presence of reverse-transcribed DNA in the cytosol. In contrast, HIV-1 is poorly sensed by CGAS, due to its capsid that cloaks viral DNA from CGAS detection. Detection of retroviral reverse-transcribed DNA in the cytosol may be indirect and be mediated via interaction with PQBP1, which directly binds reverse-transcribed retroviral DNA. Also detects the presence of DNA from bacteria, such as M.tuberculosis. 2',3'-cGAMP can be transferred from producing cells to neighboring cells through gap junctions, leading to promote STING1 activation and convey immune response to connecting cells. 2',3'-cGAMP can also be transferred between cells by virtue of packaging within viral particles contributing to IFN-induction in newly infected cells in a cGAS-independent but STING1-dependent manner. Also senses the presence of neutrophil extracellular traps (NETs) that are translocated to the cytosol following phagocytosis, leading to synthesis of 2',3'-cGAMP. In addition to foreign DNA, can also be activated by endogenous nuclear or mitochondrial DNA. When self-DNA leaks into the cytosol during cellular stress (such as mitochondrial stress, SARS-CoV-2 infection causing severe COVID-19 disease, DNA damage, mitotic arrest or senescence), or is present in form of cytosolic micronuclei, CGAS is activated leading to a state of sterile inflammation. Acts as a regulator of cellular senescence by binding to cytosolic chromatin fragments that are present in senescent cells, leading to trigger type-I interferon production via STING1 and promote cellular senescence. Also involved in the inflammatory response to genome instability and double-stranded DNA breaks: acts by localizing to micronuclei arising from genome instability. Micronuclei, which are frequently found in cancer cells, consist of chromatin surrounded by their own nuclear membrane: following breakdown of the micronuclear envelope, a process associated with chromothripsis, CGAS binds self-DNA exposed to the cytosol, leading to 2',3'-cGAMP synthesis and subsequent activation of STING1 and type-I interferon production. Activated in response to prolonged mitotic arrest, promoting mitotic cell death. In a healthy cell, CGAS is however kept inactive even in cellular events that directly expose it to self-DNA, such as mitosis, when cGAS associates with chromatin directly after nuclear envelope breakdown or remains in the form of postmitotic persistent nuclear cGAS pools bound to chromatin. Nuclear CGAS is inactivated by chromatin via direct interaction with nucleosomes, which block CGAS from DNA binding and thus prevent CGAS-induced autoimmunity. Also acts as a suppressor of DNA repair in response to DNA damage: inhibits homologous recombination repair by interacting with PARP1, the CGAS-PARP1 interaction leading to impede the formation of the PARP1-TIMELESS complex. In addition to DNA, also sense translation stress: in response to translation stress, translocates to the cytosol and associates with collided ribosomes, promoting its activation and triggering type-I interferon production. In contrast to other mammals, human CGAS displays species-specific mechanisms of DNA recognition and produces less 2',3'-cGAMP, allowing a more fine-tuned response to pathogens. In Homo sapiens (Human), this protein is Cyclic GMP-AMP synthase.